Here is a 161-residue protein sequence, read N- to C-terminus: Nucleotide-binding protein Sden_0770 (161 aa).

The protein belongs to the YajQ family.

Nucleotide-binding protein. This chain is Nucleotide-binding protein Sden_0770, found in Shewanella denitrificans (strain OS217 / ATCC BAA-1090 / DSM 15013).